We begin with the raw amino-acid sequence, 471 residues long: UTP--glucose-1-phosphate uridylyltransferase (471 aa).

UTP is bound by residues 87–90 (LNGG), lysine 101, glutamine 164, and glycine 193. 89–90 (GG) is a binding site for substrate. Substrate contacts are provided by residues histidine 194 and 222 to 224 (NSD). 2 residues coordinate UTP: aspartate 224 and lysine 362.

The protein belongs to the UDPGP type 1 family.

It localises to the cytoplasm. The catalysed reaction is alpha-D-glucose 1-phosphate + UTP + H(+) = UDP-alpha-D-glucose + diphosphate. Functionally, plays a central role as a glucosyl donor in cellular metabolic pathways. In Astragalus penduliflorus (Mountain lentil), this protein is UTP--glucose-1-phosphate uridylyltransferase (UGP).